Reading from the N-terminus, the 307-residue chain is F-box protein PP2-B7 (307 aa).

The region spanning 37-83 (PLSLGDLPEECISLIISFTSPRDACVFALVSKTFESAVQSDIVWEKF) is the F-box domain.

The polypeptide is F-box protein PP2-B7 (PP2B7) (Arabidopsis thaliana (Mouse-ear cress)).